A 218-amino-acid polypeptide reads, in one-letter code: Small ribosomal subunit protein uS3c (218 aa).

One can recognise a KH type-2 domain in the interval 43–118 (IKDYVKKNKK…RLNIAITRIE (76 aa)).

This sequence belongs to the universal ribosomal protein uS3 family. As to quaternary structure, part of the 30S ribosomal subunit.

It is found in the plastid. It localises to the chloroplast. The chain is Small ribosomal subunit protein uS3c (rps3) from Phalaenopsis aphrodite subsp. formosana (Moth orchid).